We begin with the raw amino-acid sequence, 81 residues long: Sulfur carrier protein TusA (81 aa).

C19 (cysteine persulfide intermediate) is an active-site residue.

Belongs to the sulfur carrier protein TusA family. In terms of assembly, interacts with IscS.

It localises to the cytoplasm. The protein operates within tRNA modification. Its function is as follows. Sulfur carrier protein involved in sulfur trafficking in the cell. Part of a sulfur-relay system required for 2-thiolation during synthesis of 2-thiouridine of the modified wobble base 5-methylaminomethyl-2-thiouridine (mnm(5)s(2)U) in tRNA. Interacts with IscS and stimulates its cysteine desulfurase activity. Accepts an activated sulfur from IscS, which is then transferred to TusD, and thus determines the direction of sulfur flow from IscS to 2-thiouridine formation. Also appears to be involved in sulfur transfer for the biosynthesis of molybdopterin. This is Sulfur carrier protein TusA from Escherichia fergusonii (strain ATCC 35469 / DSM 13698 / CCUG 18766 / IAM 14443 / JCM 21226 / LMG 7866 / NBRC 102419 / NCTC 12128 / CDC 0568-73).